The primary structure comprises 417 residues: Adenosylhomocysteinase (417 aa).

Substrate is bound by residues Thr53, Asp125, and Glu149. 150 to 152 serves as a coordination point for NAD(+); it reads TTT. 2 residues coordinate substrate: Lys179 and Asp183. NAD(+)-binding positions include Asn184, 213–218, Glu236, Asn271, 292–294, and Asn339; these read GYGWVG and AGH.

Belongs to the adenosylhomocysteinase family. NAD(+) is required as a cofactor.

Its subcellular location is the cytoplasm. It catalyses the reaction S-adenosyl-L-homocysteine + H2O = L-homocysteine + adenosine. It participates in amino-acid biosynthesis; L-homocysteine biosynthesis; L-homocysteine from S-adenosyl-L-homocysteine: step 1/1. May play a key role in the regulation of the intracellular concentration of adenosylhomocysteine. In Saccharolobus solfataricus (strain ATCC 35092 / DSM 1617 / JCM 11322 / P2) (Sulfolobus solfataricus), this protein is Adenosylhomocysteinase.